Here is a 57-residue protein sequence, read N- to C-terminus: MKRQKRDRQSRAHTRGYQAGISGRSKEHCPYQIDAIKSQWLGGWREAIEDKQQGLFK.

Residues 1 to 14 (MKRQKRDRQSRAHT) show a composition bias toward basic residues. The disordered stretch occupies residues 1–24 (MKRQKRDRQSRAHTRGYQAGISGR).

Belongs to the ribosome modulation factor family.

Its subcellular location is the cytoplasm. Functionally, during stationary phase, converts 70S ribosomes to an inactive dimeric form (100S ribosomes). The chain is Ribosome modulation factor 1 from Colwellia psychrerythraea (strain 34H / ATCC BAA-681) (Vibrio psychroerythus).